Here is a 417-residue protein sequence, read N- to C-terminus: Serine--tRNA ligase (417 aa).

226–228 (TSE) is a binding site for L-serine. ATP-binding positions include 257-259 (RRE) and V273. E280 provides a ligand contact to L-serine. ATP is bound at residue 344 to 347 (EVTS). T379 is an L-serine binding site.

Belongs to the class-II aminoacyl-tRNA synthetase family. Type-1 seryl-tRNA synthetase subfamily. Homodimer. The tRNA molecule binds across the dimer.

It localises to the cytoplasm. The enzyme catalyses tRNA(Ser) + L-serine + ATP = L-seryl-tRNA(Ser) + AMP + diphosphate + H(+). It carries out the reaction tRNA(Sec) + L-serine + ATP = L-seryl-tRNA(Sec) + AMP + diphosphate + H(+). It participates in aminoacyl-tRNA biosynthesis; selenocysteinyl-tRNA(Sec) biosynthesis; L-seryl-tRNA(Sec) from L-serine and tRNA(Sec): step 1/1. Functionally, catalyzes the attachment of serine to tRNA(Ser). Is also able to aminoacylate tRNA(Sec) with serine, to form the misacylated tRNA L-seryl-tRNA(Sec), which will be further converted into selenocysteinyl-tRNA(Sec). The chain is Serine--tRNA ligase from Tropheryma whipplei (strain Twist) (Whipple's bacillus).